A 344-amino-acid chain; its full sequence is Meiotically up-regulated gene 10 protein (344 aa).

Residues 48 to 207 form the DH domain; the sequence is EFNSILQEII…RELCSYIDQE (160 aa).

The protein localises to the cytoplasm. It localises to the nucleus. Its function is as follows. Has a role in meiosis. The chain is Meiotically up-regulated gene 10 protein (mug10) from Schizosaccharomyces pombe (strain 972 / ATCC 24843) (Fission yeast).